The chain runs to 675 residues: MLRATAPCWFPPGYPEAKKVAEEAALEASRHLGGEQSQAGAPEGSKMLRATAPCWFRPGYPEAKKVAKEAAPEASRHLGAEQSPAGAPEGSKMLRATAPCWFPPGYPEAKKVAEEAALEAPEFPLPSHQPAQSFGLWVPQMHKQASAFVDIQAEPQNRGPAVPPAWPKMVTESCYFPAQRGSACRLPAAPRLTERPSGVRISAPRKRKTIAHSSSPCLVTGYTDAKRTRVASSSQRSRGSKVGRQPGKTRNRSGMACKTTATTSSKRIVRRASLPSLSLKKPIILRSSGCQVPTVLRRGYLQLFTEECLKFCASKQEAEEKALNEEKVAYDCSPNKNRYLNVVLNTLKRLKGLTPSSMPGLSRAALYSRLQEFLLTQDQLKENGYPFPHPERPGGAVLFTGQGKGPGDSSCRVCCRCGTEYLVSSSGRCVRDQLCYYHWGRVRSSQVAGGRVSQYTCCAAAPGSVGCQVAKQHVRDGRKESLDGFVETFKKELSRDAYPGIYALDCEMCYTTHGLELTRVTVVDADMRVVYDTFVKPDNEIVDYNTRFSGVTEADVAKTSITLPQVQAILLSFFSAQTILIGHSLESDLLALKLIHSTVVDTAVLFPHYLGFPYKRSLRNLAADYLAQIIQDSQDGHNSSEDASACLQLVMWKVRQRAQIQPRHRSASPAALACP.

A compositionally biased stretch (basic and acidic residues) spans 66–79; the sequence is VAKEAAPEASRHLG. Disordered stretches follow at residues 66–90 and 225–263; these read VAKE…APEG and AKRT…TATT. The GOR1-125 epitope stretch occupies residues 358–483; sequence MPGLSRAALY…VRDGRKESLD (126 aa).

This sequence belongs to the REXO1/REXO3 family.

It localises to the cytoplasm. The protein resides in the nucleus. This is Putative exonuclease GOR (REXO1L1P) from Homo sapiens (Human).